A 284-amino-acid chain; its full sequence is Putative ribosome biogenesis protein C306.07c (284 aa).

A disordered region spans residues 264 to 284 (LKKSELRAQKRGSSGEGKGNK).

The protein belongs to the universal ribosomal protein uL1 family. Highly divergent. As to quaternary structure, component of the 90S pre-ribosomes.

It is found in the nucleus. The protein resides in the nucleolus. Functionally, involved in rRNA-processing and ribosome biosynthesis. In Schizosaccharomyces pombe (strain 972 / ATCC 24843) (Fission yeast), this protein is Putative ribosome biogenesis protein C306.07c.